Consider the following 329-residue polypeptide: Glycerol-3-phosphate dehydrogenase [NAD(P)+] (329 aa).

W11, R30, and K103 together coordinate NADPH. 3 residues coordinate sn-glycerol 3-phosphate: K103, G132, and S134. An NADPH-binding site is contributed by A136. Residues K187, D240, S250, R251, and N252 each contribute to the sn-glycerol 3-phosphate site. K187 functions as the Proton acceptor in the catalytic mechanism. Residue R251 participates in NADPH binding. Residues V275 and E277 each coordinate NADPH.

Belongs to the NAD-dependent glycerol-3-phosphate dehydrogenase family.

The protein localises to the cytoplasm. It catalyses the reaction sn-glycerol 3-phosphate + NAD(+) = dihydroxyacetone phosphate + NADH + H(+). The catalysed reaction is sn-glycerol 3-phosphate + NADP(+) = dihydroxyacetone phosphate + NADPH + H(+). Its pathway is membrane lipid metabolism; glycerophospholipid metabolism. Catalyzes the reduction of the glycolytic intermediate dihydroxyacetone phosphate (DHAP) to sn-glycerol 3-phosphate (G3P), the key precursor for phospholipid synthesis. This chain is Glycerol-3-phosphate dehydrogenase [NAD(P)+], found in Dechloromonas aromatica (strain RCB).